The following is a 372-amino-acid chain: DNA/RNA-binding protein ALBA4 (372 aa).

This sequence belongs to the histone-like Alba family. Identified in a TARE6-associated complex consisting of over 30 proteins and including ALBA1, ALBA2 and ALBA4; the complex binds to the non-coding subtelomeric repeat region TARE6.

It is found in the nucleus. Its subcellular location is the chromosome. The protein resides in the telomere. The protein localises to the cytoplasm. Functionally, possesses DNA- and RNA-binding activities. Binds to DNA fragments longer than 14 base pairs with relaxed sequence specificity. Associates with the subtelomeric TARE6 repeats. Regulates the abundance of transcript sub-populations in a stage-specific manner. Regulates activation of male gametocytes. Participates in the coordination of sporozoite development in the oocyst. This is DNA/RNA-binding protein ALBA4 from Plasmodium falciparum (isolate 3D7).